A 1084-amino-acid polypeptide reads, in one-letter code: Ribonucleoside-diphosphate reductase NrdEB subunit alpha (1084 aa).

Substrate-binding positions include Thr-152, 168-169 (SC), and Gly-197. Residues Cys-169 and Cys-793 are joined by a disulfide bond. The active-site Proton acceptor is the Asn-379. Cys-381 (cysteine radical intermediate) is an active-site residue. The region spanning 503–654 (IMGIIAGDGT…VQKLLLNMGV (152 aa)) is the DOD-type homing endonuclease domain. Glu-768 serves as the catalytic Proton acceptor. 964–968 (PTGSI) contributes to the substrate binding site.

This sequence belongs to the ribonucleoside diphosphate reductase large chain family. In terms of assembly, tetramer of two alpha and two beta subunits. In terms of processing, this protein undergoes protein self-splicing that involves post-translational excision of the intervening region (intein) followed by peptide ligation.

It carries out the reaction a 2'-deoxyribonucleoside 5'-diphosphate + [thioredoxin]-disulfide + H2O = a ribonucleoside 5'-diphosphate + [thioredoxin]-dithiol. With respect to regulation, under complex allosteric control mediated by deoxynucleoside triphosphates and ATP binding. The type of nucleotide bound at the specificity site determines substrate preference. It seems probable that ATP makes the enzyme reduce CDP and UDP, dGTP favors ADP reduction and dTTP favors GDP reduction. Provides the precursors necessary for DNA synthesis. Catalyzes the biosynthesis of deoxyribonucleotides from the corresponding ribonucleotides. The polypeptide is Ribonucleoside-diphosphate reductase NrdEB subunit alpha (nrdEB) (Bacillus subtilis (strain 168)).